The following is a 210-amino-acid chain: Leucyl/phenylalanyl-tRNA--protein transferase (210 aa).

This sequence belongs to the L/F-transferase family.

The protein resides in the cytoplasm. The enzyme catalyses N-terminal L-lysyl-[protein] + L-leucyl-tRNA(Leu) = N-terminal L-leucyl-L-lysyl-[protein] + tRNA(Leu) + H(+). It catalyses the reaction N-terminal L-arginyl-[protein] + L-leucyl-tRNA(Leu) = N-terminal L-leucyl-L-arginyl-[protein] + tRNA(Leu) + H(+). The catalysed reaction is L-phenylalanyl-tRNA(Phe) + an N-terminal L-alpha-aminoacyl-[protein] = an N-terminal L-phenylalanyl-L-alpha-aminoacyl-[protein] + tRNA(Phe). Its function is as follows. Functions in the N-end rule pathway of protein degradation where it conjugates Leu, Phe and, less efficiently, Met from aminoacyl-tRNAs to the N-termini of proteins containing an N-terminal arginine or lysine. In Ruegeria pomeroyi (strain ATCC 700808 / DSM 15171 / DSS-3) (Silicibacter pomeroyi), this protein is Leucyl/phenylalanyl-tRNA--protein transferase.